A 227-amino-acid chain; its full sequence is PKHD-type hydroxylase Dtpsy_0528 (227 aa).

Residues 78 to 178 enclose the Fe2OG dioxygenase domain; that stretch reads TIYPPKFNRY…RVASFFWIES (101 aa). Residues His-96, Asp-98, and His-159 each contribute to the Fe cation site. Arg-169 serves as a coordination point for 2-oxoglutarate.

The cofactor is Fe(2+). L-ascorbate serves as cofactor.

This chain is PKHD-type hydroxylase Dtpsy_0528, found in Acidovorax ebreus (strain TPSY) (Diaphorobacter sp. (strain TPSY)).